The primary structure comprises 285 residues: Xanthoxin dehydrogenase (285 aa).

Ser-2 is modified (N-acetylserine).

Belongs to the short-chain dehydrogenases/reductases (SDR) family. As to expression, predominantly in roots and stems, and at lower levels in leaves and seeds.

Its subcellular location is the cytoplasm. It catalyses the reaction 2-cis,4-trans-xanthoxin + NAD(+) = 2-cis-(+)-abscisic aldehyde + NADH + H(+). The catalysed reaction is 2-trans,4-trans-xanthoxin + NAD(+) = 2-trans-(+)-abscisic aldehyde + NADH + H(+). In terms of biological role, involved in the biosynthesis of abscisic acid. Catalyzes the conversion of xanthoxin to abscisic aldehyde. This Arabidopsis thaliana (Mouse-ear cress) protein is Xanthoxin dehydrogenase.